We begin with the raw amino-acid sequence, 380 residues long: F-box/kelch-repeat protein At3g18720 (380 aa).

The region spanning 47–94 is the F-box domain; that stretch reads LWDKQIPTDLLQEILSRLGLKANIHASLVCKTWLKEAVSVRKFQSRPW. Kelch repeat units lie at residues 190-233 and 234-279; these read CVIS…INRC and IFSN…LVRQ.

This Arabidopsis thaliana (Mouse-ear cress) protein is F-box/kelch-repeat protein At3g18720.